A 324-amino-acid chain; its full sequence is NADH-ubiquinone oxidoreductase chain 1 (324 aa).

Transmembrane regions (helical) follow at residues Leu-9–Ile-29, Pro-43–Ile-63, Phe-77–Leu-97, Leu-106–Gly-126, Ile-146–Phe-166, Thr-177–Ala-197, Leu-228–Phe-248, Gln-259–Ile-279, and Phe-299–Ser-319.

This sequence belongs to the complex I subunit 1 family.

It localises to the mitochondrion inner membrane. The enzyme catalyses a ubiquinone + NADH + 5 H(+)(in) = a ubiquinol + NAD(+) + 4 H(+)(out). Functionally, core subunit of the mitochondrial membrane respiratory chain NADH dehydrogenase (Complex I) that is believed to belong to the minimal assembly required for catalysis. Complex I functions in the transfer of electrons from NADH to the respiratory chain. The immediate electron acceptor for the enzyme is believed to be ubiquinone. In Scyliorhinus canicula (Small-spotted catshark), this protein is NADH-ubiquinone oxidoreductase chain 1 (MT-ND1).